The chain runs to 286 residues: ATP synthase gamma chain (286 aa).

This sequence belongs to the ATPase gamma chain family. F-type ATPases have 2 components, CF(1) - the catalytic core - and CF(0) - the membrane proton channel. CF(1) has five subunits: alpha(3), beta(3), gamma(1), delta(1), epsilon(1). CF(0) has three main subunits: a, b and c.

Its subcellular location is the cell inner membrane. Functionally, produces ATP from ADP in the presence of a proton gradient across the membrane. The gamma chain is believed to be important in regulating ATPase activity and the flow of protons through the CF(0) complex. The sequence is that of ATP synthase gamma chain from Pseudomonas fluorescens (strain SBW25).